Consider the following 380-residue polypeptide: MASLRKSHPLLKIANHILVDLPAPSNISAWWNFGSLLGLCLATQILTGLFLAMHYTSDIATAFSSVMHICRDVNYGWLIRNMHANGASFFFICIYLHIGRGLYYGSYLYKETWNVGVALFLLTMMTAFVGYVLPWGQMSFWGATVITNLMSAVPYVGNDLVQWIWGGFSVDNATLTRFFAFHFLFPFVIAALTAIHLLFLHETGSNNPAGLNSDADKVTFHPYFSYKDLLGFATLMVTLTSLALFSPNLLGDPDNFTPANPLVTPPHIKPEWYFLFAYAILRSIPNKLGGVLALLSSILILTAVPALHASKQRSTTFRPITQLLFWTLVAAVLVLTWIGGMPVEHPFIIIGQIASLLYFMLFLTLIPAAALAENKALEWN.

The next 4 membrane-spanning stretches (helical) occupy residues 33–53, 77–98, 113–133, and 178–198; these read FGSLLGLCLATQILTGLFLAM, WLIRNMHANGASFFFICIYLHI, WNVGVALFLLTMMTAFVGYVL, and FFAFHFLFPFVIAALTAIHLL. 2 residues coordinate heme b: H83 and H97. 2 residues coordinate heme b: H182 and H196. H201 provides a ligand contact to a ubiquinone. 4 helical membrane passes run 226-246, 288-308, 320-340, and 347-367; these read YKDLLGFATLMVTLTSLALFS, LGGVLALLSSILILTAVPALH, ITQLLFWTLVAAVLVLTWIGG, and FIIIGQIASLLYFMLFLTLIP.

The protein belongs to the cytochrome b family. As to quaternary structure, the cytochrome bc1 complex contains 3 respiratory subunits (MT-CYB, CYC1 and UQCRFS1), 2 core proteins (UQCRC1 and UQCRC2) and probably 6 low-molecular weight proteins. Heme b serves as cofactor.

It is found in the mitochondrion inner membrane. In terms of biological role, component of the ubiquinol-cytochrome c reductase complex (complex III or cytochrome b-c1 complex) that is part of the mitochondrial respiratory chain. The b-c1 complex mediates electron transfer from ubiquinol to cytochrome c. Contributes to the generation of a proton gradient across the mitochondrial membrane that is then used for ATP synthesis. The sequence is that of Cytochrome b (mt-cyb) from Percopsis transmontana (Sand roller).